The primary structure comprises 1012 residues: RNA-binding protein 26 (1012 aa).

K94 is covalently cross-linked (Glycyl lysine isopeptide (Lys-Gly) (interchain with G-Cter in SUMO2)). The stretch at 98 to 127 forms a coiled coil; the sequence is LQHQEKDIKKEELTKEEEREKKFSRRLNHS. K106 is covalently cross-linked (Glycyl lysine isopeptide (Lys-Gly) (interchain with G-Cter in SUMO1); alternate). A Glycyl lysine isopeptide (Lys-Gly) (interchain with G-Cter in SUMO2); alternate cross-link involves residue K106. Over residues 106-118 the composition is skewed to basic and acidic residues; that stretch reads KKEELTKEEEREK. Residues 106–236 are disordered; that stretch reads KKEELTKEEE…PLENNYTPVS (131 aa). S127 carries the post-translational modification Phosphoserine. Over residues 134–168 the composition is skewed to basic and acidic residues; the sequence is RYRDNRSRDERKKDDRSRKRDYDRNPPRRDSYRDR. Positions 169–186 are enriched in basic residues; sequence YNRRRGRSRSYSRSRSRS. 2 stretches are compositionally biased toward basic and acidic residues: residues 187–201 and 209–227; these read WSKE…DRSR and RSRE…RTDP. A C3H1-type zinc finger spans residues 288–316; the sequence is PMPKKRCRDYDEKGFCMRGDMCPFDHGSD. Residues 334–388 show a composition bias toward pro residues; the sequence is QPPVVEGPPPPGLPPPPPILTPPPVNLRPPVPPPGPLPPSLPPVTGPPPPLPPLQ. 2 disordered regions span residues 334–404 and 465–520; these read QPPV…SSVP and IGLT…NFNR. Positions 394–404 are enriched in low complexity; sequence APPNSATSSVP. At S501 the chain carries Phosphoserine. An N6-acetyllysine modification is found at K515. The residue at position 523 (S523) is a Phosphoserine. The RRM 1 domain occupies 537-611; it reads TKLELRKVPP…RFIKVYWHRE (75 aa). S621 carries the post-translational modification Phosphoserine. Residues 647–667 form a disordered region; the sequence is PVPSATTEPAEAQSATSELPQ. 2 coiled-coil regions span residues 724 to 800 and 828 to 852; these read DNNE…KSTS and KKMQ…EAAK. Residues 858–889 form a disordered region; the sequence is SGRGRGIHTRGRGTAHGRGRGRGRGRGVPGHA. Positions 862 to 882 are enriched in basic residues; the sequence is RGIHTRGRGTAHGRGRGRGRG. The 70-residue stretch at 896–965 folds into the RRM 2 domain; it reads RALEISAFTE…QDLKLAWNKP (70 aa). The tract at residues 970–1012 is disordered; sequence SAVDTEEAEPDEEEFQEESLVDDSLLQDDDEEEEDNESRSWRR. Residues 973 to 1005 show a composition bias toward acidic residues; it reads DTEEAEPDEEEFQEESLVDDSLLQDDDEEEEDN.

As to expression, expressed in testis and ovary.

Functionally, may be involved in the turnover of nuclear polyadenylated (pA+) RNA. The polypeptide is RNA-binding protein 26 (Mus musculus (Mouse)).